The chain runs to 400 residues: Phosphoglycerate kinase (400 aa).

Substrate-binding positions include 21–23 (DFN), Arg36, 59–62 (HLGR), Arg119, and Arg160. ATP contacts are provided by residues Lys211, Glu329, and 356 to 359 (GGDS).

Belongs to the phosphoglycerate kinase family. In terms of assembly, monomer.

Its subcellular location is the cytoplasm. The catalysed reaction is (2R)-3-phosphoglycerate + ATP = (2R)-3-phospho-glyceroyl phosphate + ADP. The protein operates within carbohydrate degradation; glycolysis; pyruvate from D-glyceraldehyde 3-phosphate: step 2/5. The sequence is that of Phosphoglycerate kinase from Levilactobacillus brevis (strain ATCC 367 / BCRC 12310 / CIP 105137 / JCM 1170 / LMG 11437 / NCIMB 947 / NCTC 947) (Lactobacillus brevis).